Reading from the N-terminus, the 172-residue chain is Adenine phosphoribosyltransferase (172 aa).

Belongs to the purine/pyrimidine phosphoribosyltransferase family. As to quaternary structure, homodimer.

It localises to the cytoplasm. It carries out the reaction AMP + diphosphate = 5-phospho-alpha-D-ribose 1-diphosphate + adenine. Its pathway is purine metabolism; AMP biosynthesis via salvage pathway; AMP from adenine: step 1/1. Catalyzes a salvage reaction resulting in the formation of AMP, that is energically less costly than de novo synthesis. The sequence is that of Adenine phosphoribosyltransferase from Clostridium beijerinckii (strain ATCC 51743 / NCIMB 8052) (Clostridium acetobutylicum).